Consider the following 271-residue polypeptide: MATH domain and coiled-coil domain-containing protein At3g27040 (271 aa).

The MATH domain occupies 7-133 (DKKFTWVIKN…NGEVKIVAEV (127 aa)). The stretch at 230 to 271 (KLDWLEKKLKETGKSRLQEIEEDLKDLKVKCADMDALLDFLR) forms a coiled coil.

This Arabidopsis thaliana (Mouse-ear cress) protein is MATH domain and coiled-coil domain-containing protein At3g27040.